Reading from the N-terminus, the 957-residue chain is ERC protein 2 (957 aa).

Polar residues predominate over residues 1–13; that stretch reads MYGSARTITNLEG. The tract at residues 1 to 44 is disordered; the sequence is MYGSARTITNLEGSPSRSPRLPRSPRLGHRRTSSGGGGGTGKTL. Over residues 14–25 the composition is skewed to low complexity; it reads SPSRSPRLPRSP. Phosphoserine occurs at positions 65 and 666. Positions 140-917 form a coiled coil; sequence RQVRDSTMLD…RMKLMADNYD (778 aa). The tract at residues 918–957 is disordered; that stretch reads DDHHHYHHHHHHHHHRSPGRSQHSNHRPSPDQDDEEGIWA. A compositionally biased stretch (basic residues) spans 922–943; it reads HYHHHHHHHHHRSPGRSQHSNH. Over residues 948–957 the composition is skewed to acidic residues; sequence DQDDEEGIWA.

Interacts with BSN, ERC1, PPFIA1, PPFIA2, PPFIA3 and PPFIA4. Interacts through its C-terminus with the PDZ domain of RIMS1. Part of a complex consisting of ERC2, RIMS1 and UNC13A.

The protein localises to the cytoplasm. Its subcellular location is the synapse. The protein resides in the presynaptic active zone. It is found in the cytoskeleton. Functionally, thought to be involved in the organization of the cytomatrix at the nerve terminals active zone (CAZ) which regulates neurotransmitter release. Seems to act together with BSN. May recruit liprin-alpha proteins to the CAZ. This chain is ERC protein 2 (ERC2), found in Homo sapiens (Human).